The sequence spans 446 residues: MTVMVSQIESIGQIVRDEVTVIWILMALVLLAYLILPNPTYRTNVKVPTVRYLGGWIPDQVDRLFFNTKATSVIYDGYKQYKKKAYKVLKADGDLVVLSTRKSSSPPPHSYEVFLRLVARVGARVFIGETLCRDEQWLKASIDYTKNIFVTIALLRPVPGFLQPLVGRVLPSSRSLNHQLAYIKNKFLGPLIEQRREMESSGDSKYEKPDDFLQWMMDLAKTEQESHPHNLAQRLLGITSMAVVHTSAMSLTHILYDLLVMPQWLQPLRDEIQEVNPDWHSTTQAHLIGLKGMDSFLKESQRFNPPGELSFHRVVKHDLTLSDGLFLPKGTHICMAAGPISRDADVMSDPDVFDAFRFVKENRPTSGFVSTGVTNMHFGLGRYACPGRFFAAFVMKAILSRFLTNYDFRFGPDQKDRPKNMMIGDKIVPNVSTPIFIRKRTTSQPL.

The chain crosses the membrane as a helical span at residues 19–39 (VTVIWILMALVLLAYLILPNP). Heme is bound at residue C385. N430 carries N-linked (GlcNAc...) asparagine glycosylation.

This sequence belongs to the cytochrome P450 family. The cofactor is heme.

Its subcellular location is the membrane. The protein operates within secondary metabolite biosynthesis. Functionally, cytochrome P450 monooxygenase; part of the gene cluster that mediates the biosynthesis of the indole diterpenes penitrems. The geranylgeranyl diphosphate (GGPP) synthase ptmG catalyzes the first step in penitrem biosynthesis via conversion of farnesyl pyrophosphate and isopentyl pyrophosphate into geranylgeranyl pyrophosphate (GGPP). Condensation of indole-3-glycerol phosphate with GGPP by the prenyl transferase ptmC then forms 3-geranylgeranylindole (3-GGI). Epoxidation by the FAD-dependent monooxygenase ptmM leads to a epoxidized-GGI that is substrate of the terpene cyclase ptmB for cyclization to yield paspaline. Paspaline is subsequently converted to 13-desoxypaxilline by the cytochrome P450 monooxygenase ptmP, the latter being then converted to paxilline by the cytochrome P450 monooxygenase ptmQ. Paxilline is converted to beta-paxitriol via C-10 ketoreduction by the short-chain dehydrogenase ptmH which can be monoprenylated at the C-20 by the indole diterpene prenyltransferase ptmD. A two-step elimination (acetylation and elimination) process performed by the O-acetyltransferase ptmV and ptmI leads to the production of the prenylated form of penijanthine. The FAD-linked oxidoreductase ptmO then converts the prenylated form of penijanthine into PC-M5 which is in turn transformed into PC-M4 by the aromatic dimethylallyltransferase ptmE. Five sequential oxidative transformations performed by the cytochrome P450 monooxygenases ptmK, ptmU, ptmL, ptmN and ptmJ yield the various penitrem compounds. PtmK, ptmU and ptmM are involved in the formation of the key bicyclic ring of penitrem C via the formation of the intermediates secopenitrem D and penitrem D. PtmL catalyzes the epoxidation of penitrem D and C to yield penitrem B and F, respectively. PtmJ catalyzes the last benzylic hydroxylation to convert penitrem B to prenitrem E and penitrem F to penitrem A. The polypeptide is Cytochrome P450 monooxygenase ptmP (Penicillium ochrochloron).